Consider the following 112-residue polypeptide: UPF0145 protein LAF_1635 (112 aa).

It belongs to the UPF0145 family.

The chain is UPF0145 protein LAF_1635 from Limosilactobacillus fermentum (strain NBRC 3956 / LMG 18251) (Lactobacillus fermentum).